A 241-amino-acid chain; its full sequence is NADPH-dependent FMN reductase ArsH (241 aa).

43-50 contributes to the FMN binding site; the sequence is SLRTVSYS.

The protein belongs to the ArsH family. Homotetramer. The cofactor is FMN.

Has NADPH-dependent FMN reductase activity. No activity with NADH. May play a role in resistance to heavy metal toxicity. This chain is NADPH-dependent FMN reductase ArsH, found in Rhizobium meliloti (strain 1021) (Ensifer meliloti).